A 272-amino-acid polypeptide reads, in one-letter code: MSYLEAIILGLVQGLTEFLPISSSAHLRIAGLFMGGDPGATFTAITQLGTELAVVVFFRKRIGKVLSAWSRSLRGGMPKGDPDVRMGWLVIIGTIPIGIAGYLFQDTIRSTFRSLWIVAIVLIVFGILLGLADRYSRSDRLEKDMTYGHGVSIGIAQALALVPGVSRSGATTTAARAFGYSRPVAAEYSFLLAVPAVFGSGLYELVKSFDETGQAGAGQTAVATLIAFIVGLAVIAGLMRYISTRTFMPFVVYRVALGVVLLVLLGTGAIAA.

8 helical membrane passes run 1 to 21 (MSYL…FLPI), 38 to 58 (PGAT…VVFF), 84 to 104 (VRMG…GYLF), 112 to 132 (FRSL…LGLA), 145 to 165 (MTYG…VPGV), 183 to 203 (PVAA…SGLY), 219 to 239 (QTAV…AGLM), and 250 to 270 (FVVY…TGAI).

This sequence belongs to the UppP family.

The protein localises to the cell membrane. The enzyme catalyses di-trans,octa-cis-undecaprenyl diphosphate + H2O = di-trans,octa-cis-undecaprenyl phosphate + phosphate + H(+). Functionally, catalyzes the dephosphorylation of undecaprenyl diphosphate (UPP). Confers resistance to bacitracin. In Clavibacter michiganensis subsp. michiganensis (strain NCPPB 382), this protein is Undecaprenyl-diphosphatase.